We begin with the raw amino-acid sequence, 432 residues long: uncharacterized protein (432 aa).

Over residues 1–14 (MSDTTDVPENQKSP) the composition is skewed to polar residues. A disordered region spans residues 1–42 (MSDTTDVPENQKSPKPSGKADKRKIEEKPENSSLKRKKFEDP). Basic and acidic residues predominate over residues 18–30 (GKADKRKIEEKPE). Residues 85–148 (RKMVEVFSGE…HEHPIRDLPI (64 aa)) form the S4 RNA-binding domain. Aspartate 199 is a catalytic residue.

It belongs to the pseudouridine synthase RluA family.

This is an uncharacterized protein from Caenorhabditis elegans.